The following is a 307-amino-acid chain: Protoheme IX farnesyltransferase (307 aa).

The next 9 helical transmembrane spans lie at 28–48 (VTQL…PGMV), 50–70 (WPVL…AFAI), 100–120 (ILLF…VFAN), 122–142 (LTMW…TLLL), 149–169 (NIVI…AAVA), 176–196 (AWIL…ALAL), 218–238 (FTLL…ILPF), 243–263 (SGYL…VHAW), and 282–302 (IVYL…KFGP).

It belongs to the UbiA prenyltransferase family. Protoheme IX farnesyltransferase subfamily.

The protein resides in the cell inner membrane. The catalysed reaction is heme b + (2E,6E)-farnesyl diphosphate + H2O = Fe(II)-heme o + diphosphate. It participates in porphyrin-containing compound metabolism; heme O biosynthesis; heme O from protoheme: step 1/1. Its function is as follows. Converts heme B (protoheme IX) to heme O by substitution of the vinyl group on carbon 2 of heme B porphyrin ring with a hydroxyethyl farnesyl side group. The polypeptide is Protoheme IX farnesyltransferase (Ralstonia nicotianae (strain ATCC BAA-1114 / GMI1000) (Ralstonia solanacearum)).